The chain runs to 138 residues: UPF0310 protein MAV_1800 (138 aa).

It belongs to the UPF0310 family.

The chain is UPF0310 protein MAV_1800 from Mycobacterium avium (strain 104).